A 615-amino-acid chain; its full sequence is Sodium-dependent noradrenaline transporter (615 aa).

Residues 1–28 (MLLARMNPQVQPENGGAGPGSEQPPRKR) form a disordered region. The Cytoplasmic portion of the chain corresponds to 1–60 (MLLARMNPQVQPENGGAGPGSEQPPRKRKEVLVVKERNGVQCLLASRDGDEQPRETWGKK). The chain crosses the membrane as a helical span at residues 61–86 (IDFLLSVVGFAVDLANVWRFPYLCYK). Gly69, Ala71, and Val72 together coordinate Na(+). Residue Asp73 coordinates (R)-noradrenaline. Asp73 contributes to the dopamine binding site. Asn76 is a Na(+) binding site. (R)-noradrenaline contacts are provided by Tyr85 and Lys86. Over 87–90 (NGGG) the chain is Extracellular. The helical transmembrane segment at 91–114 (AFLIPYTLFLIIAGMPLFYMELAL) threads the bilayer. Over 115–133 (GQYNREGAATVWKICPFFK) the chain is Cytoplasmic. A helical membrane pass occupies residues 134-164 (GVGYAVILIALYVGFYYNVIIAWSLYYLFSS). Ala143 and Gly147 together coordinate (R)-noradrenaline. Ala143 is a dopamine binding site. At 165-231 (FTPTLPWTDC…SSGIHDIGLP (67 aa)) the chain is on the extracellular side. Cys174 and Cys183 are disulfide-bonded. 3 N-linked (GlcNAc...) asparagine glycosylation sites follow: Asn182, Asn190, and Asn196. The helical transmembrane segment at 232–252 (QWQLLLCLIIVVIVLFFSLWK) threads the bilayer. Topologically, residues 253–255 (GVK) are cytoplasmic. The chain crosses the membrane as a helical span at residues 256–280 (TSGKVVWITATLPYLVLFVLLVHGI). The Extracellular segment spans residues 281–304 (TLPGASNGINAYLHIDFYRLKEAT). A helical transmembrane segment spans residues 305–330 (VWIDAATQIFFSLGAGFGVLIAFASY). Residue Phe315 coordinates (R)-noradrenaline. Phe315 contacts dopamine. Residue Ser316 participates in Na(+) binding. Residues 331-336 (NKFDNN) are Cytoplasmic-facing. The helical transmembrane segment at 337 to 360 (CYRDALLTSTINCVTSFISGFAIF) threads the bilayer. A Na(+)-binding site is contributed by Asn348. Residues 361-400 (SILGYMAHEHKVNIEDVATEGAGLVFILYPEAISTLSGST) lie on the Extracellular side of the membrane. Glu380 provides a ligand contact to (R)-noradrenaline. Residue Glu380 coordinates dopamine. A helical membrane pass occupies residues 401–426 (FWAIVFFIMLLALGIDSSMGGMEAVI). Residues Asp416 and Ser417 each contribute to the Na(+) site. The Cytoplasmic portion of the chain corresponds to 427 to 441 (TGLADDFQVLKRHRK). The helical transmembrane segment at 442–462 (LFTFAVSFGTFLLALFCITKG) threads the bilayer. Position 463 (Gly463) is a topological domain, extracellular. A helical membrane pass occupies residues 464–490 (IYVLTLLDTFAAGTSILFAVLMEAIGV). The Cytoplasmic portion of the chain corresponds to 491 to 520 (SWFYGVDRFSNDIQQMMGFKPGLYWRLCWK). Residues 521-543 (FVSPAFLLFVVIVSIINFKPLTY) traverse the membrane as a helical segment. Topologically, residues 544–546 (DDY) are extracellular. Residues 547–567 (IFPLWANWVGWGIAGSSMVLV) form a helical membrane-spanning segment. Topologically, residues 568-615 (PAYIVYKFFSTRGSIRERLAYGITPASEHHLVAQRDIRQFQLQHWLAI) are cytoplasmic.

The protein belongs to the sodium:neurotransmitter symporter (SNF) (TC 2.A.22) family. SLC6A2 subfamily. As to quaternary structure, monomer. Can form homodimers in the cell membrane; homodimerization is mostly mediated by cholesterol and lipids, and regulates neurotransmitter transport activity. Interacts with PRKCABP. In terms of processing, palmitoylated. Palmitoylation regulates protein levels and neurotransmitter transport.

Its subcellular location is the cell membrane. It localises to the cell projection. The protein localises to the axon. It is found in the synapse. The protein resides in the synaptosome. The catalysed reaction is (R)-noradrenaline(out) + chloride(out) + Na(+)(out) = (R)-noradrenaline(in) + chloride(in) + Na(+)(in). The enzyme catalyses dopamine(out) + chloride(out) + Na(+)(out) = dopamine(in) + chloride(in) + Na(+)(in). It carries out the reaction dopamine(out) + chloride(out) + 2 Na(+)(out) = dopamine(in) + chloride(in) + 2 Na(+)(in). Its activity is regulated as follows. Inhibited by nisoxetine, oxaprotiline and desipramin. Mediates sodium- and chloride-dependent transport of norepinephrine (also known as noradrenaline), the primary signaling neurotransmitter in the autonomic sympathetic nervous system. Is responsible for norepinephrine re-uptake and clearance from the synaptic cleft, thus playing a crucial role in norepinephrine inactivation and homeostasis. Can also mediate sodium- and chloride-dependent transport of dopamine. This is Sodium-dependent noradrenaline transporter (SLC6A2) from Bos taurus (Bovine).